The following is a 155-amino-acid chain: Riboflavin synthase (155 aa).

It belongs to the DMRL synthase family.

The enzyme catalyses 2 6,7-dimethyl-8-(1-D-ribityl)lumazine + H(+) = 5-amino-6-(D-ribitylamino)uracil + riboflavin. The protein operates within cofactor biosynthesis; riboflavin biosynthesis; riboflavin from 2-hydroxy-3-oxobutyl phosphate and 5-amino-6-(D-ribitylamino)uracil: step 2/2. The protein is Riboflavin synthase (ribC) of Aeropyrum pernix (strain ATCC 700893 / DSM 11879 / JCM 9820 / NBRC 100138 / K1).